Consider the following 182-residue polypeptide: Bifunctional protein PyrR (182 aa).

Residues 97–109 (VVLVDDVIFRGRT) carry the PRPP-binding motif.

The protein belongs to the purine/pyrimidine phosphoribosyltransferase family. PyrR subfamily.

It catalyses the reaction UMP + diphosphate = 5-phospho-alpha-D-ribose 1-diphosphate + uracil. Its function is as follows. Regulates the transcription of the pyrimidine nucleotide (pyr) operon in response to exogenous pyrimidines. Also displays a weak uracil phosphoribosyltransferase activity which is not physiologically significant. In Synechococcus sp. (strain JA-2-3B'a(2-13)) (Cyanobacteria bacterium Yellowstone B-Prime), this protein is Bifunctional protein PyrR.